A 239-amino-acid chain; its full sequence is Peptidyl-tRNA hydrolase (239 aa).

TRNA is bound at residue Y14. H19 functions as the Proton acceptor in the catalytic mechanism. TRNA contacts are provided by F64, N66, and N112. Positions 199–227 are disordered; it reads EKPAQKGRSHIRQARPKAPPAELPSSGPM. Residues 203–213 are compositionally biased toward basic residues; that stretch reads QKGRSHIRQAR.

The protein belongs to the PTH family. As to quaternary structure, monomer.

It is found in the cytoplasm. The catalysed reaction is an N-acyl-L-alpha-aminoacyl-tRNA + H2O = an N-acyl-L-amino acid + a tRNA + H(+). Its function is as follows. Hydrolyzes ribosome-free peptidyl-tRNAs (with 1 or more amino acids incorporated), which drop off the ribosome during protein synthesis, or as a result of ribosome stalling. Functionally, catalyzes the release of premature peptidyl moieties from peptidyl-tRNA molecules trapped in stalled 50S ribosomal subunits, and thus maintains levels of free tRNAs and 50S ribosomes. The sequence is that of Peptidyl-tRNA hydrolase from Chelativorans sp. (strain BNC1).